Reading from the N-terminus, the 469-residue chain is 3-isopropylmalate dehydratase large subunit (469 aa).

3 residues coordinate [4Fe-4S] cluster: cysteine 349, cysteine 410, and cysteine 413.

This sequence belongs to the aconitase/IPM isomerase family. LeuC type 1 subfamily. As to quaternary structure, heterodimer of LeuC and LeuD. Requires [4Fe-4S] cluster as cofactor.

The catalysed reaction is (2R,3S)-3-isopropylmalate = (2S)-2-isopropylmalate. It participates in amino-acid biosynthesis; L-leucine biosynthesis; L-leucine from 3-methyl-2-oxobutanoate: step 2/4. Functionally, catalyzes the isomerization between 2-isopropylmalate and 3-isopropylmalate, via the formation of 2-isopropylmaleate. The protein is 3-isopropylmalate dehydratase large subunit of Neisseria meningitidis serogroup B (strain ATCC BAA-335 / MC58).